A 154-amino-acid polypeptide reads, in one-letter code: 6,7-dimethyl-8-ribityllumazine synthase (154 aa).

Residues Phe22, 56–58 (AFE), and 80–82 (TVI) each bind 5-amino-6-(D-ribitylamino)uracil. A (2S)-2-hydroxy-3-oxobutyl phosphate-binding site is contributed by 85 to 86 (ST). Catalysis depends on His88, which acts as the Proton donor. Phe113 serves as a coordination point for 5-amino-6-(D-ribitylamino)uracil. Arg127 contributes to the (2S)-2-hydroxy-3-oxobutyl phosphate binding site.

Belongs to the DMRL synthase family.

It carries out the reaction (2S)-2-hydroxy-3-oxobutyl phosphate + 5-amino-6-(D-ribitylamino)uracil = 6,7-dimethyl-8-(1-D-ribityl)lumazine + phosphate + 2 H2O + H(+). The protein operates within cofactor biosynthesis; riboflavin biosynthesis; riboflavin from 2-hydroxy-3-oxobutyl phosphate and 5-amino-6-(D-ribitylamino)uracil: step 1/2. Functionally, catalyzes the formation of 6,7-dimethyl-8-ribityllumazine by condensation of 5-amino-6-(D-ribitylamino)uracil with 3,4-dihydroxy-2-butanone 4-phosphate. This is the penultimate step in the biosynthesis of riboflavin. This chain is 6,7-dimethyl-8-ribityllumazine synthase, found in Lactococcus lactis subsp. lactis (strain IL1403) (Streptococcus lactis).